Here is a 480-residue protein sequence, read N- to C-terminus: PTS system sucrose-specific EIIBC component (480 aa).

Positions 4 to 87 constitute a PTS EIIB type-1 domain; the sequence is KKSAENILQA…EKITGKEASS (84 aa). C26 (phosphocysteine intermediate; for EIIB activity) is an active-site residue. A run of 8 helical transmembrane segments spans residues 109-129, 158-178, 182-202, 264-284, 303-323, 349-369, 405-425, and 449-469; these read LSDI…LMGI, MINI…GFSA, FGGN…PELM, LLTP…FVGP, FGGA…VITG, PIAT…FFII, PFIG…FFKV, and LHYG…TYAL. The PTS EIIC type-1 domain occupies 120 to 480; it reads IVAGGLLMGI…YRKKYRNIEA (361 aa).

It localises to the cell membrane. The enzyme catalyses N(pros)-phospho-L-histidyl-[protein](out) + sucrose = sucrose 6(G)-phosphate(in) + L-histidyl-[protein]. The phosphoenolpyruvate-dependent sugar phosphotransferase system (sugar PTS), a major carbohydrate active transport system, catalyzes the phosphorylation of incoming sugar substrates concomitantly with their translocation across the cell membrane. This system is involved in sucrose transport. The protein is PTS system sucrose-specific EIIBC component of Staphylococcus xylosus.